The chain runs to 142 residues: Small heat shock protein IbpB (142 aa).

In terms of domain architecture, sHSP spans 25–136 (GQEPQGFPPY…QPQRIAIGTT (112 aa)).

This sequence belongs to the small heat shock protein (HSP20) family. Homodimer. Forms homomultimers of about 100-150 subunits at optimal growth temperatures. Conformation changes to oligomers at high temperatures or high ionic concentrations. The decrease in size of the multimers is accompanied by an increase in chaperone activity.

It is found in the cytoplasm. Associates with aggregated proteins, together with IbpA, to stabilize and protect them from irreversible denaturation and extensive proteolysis during heat shock and oxidative stress. Aggregated proteins bound to the IbpAB complex are more efficiently refolded and reactivated by the ATP-dependent chaperone systems ClpB and DnaK/DnaJ/GrpE. Its activity is ATP-independent. The chain is Small heat shock protein IbpB from Serratia proteamaculans (strain 568).